Consider the following 167-residue polypeptide: Glucose-6-phosphate isomerase (167 aa).

The active-site Proton donor is the Glu-54. Residue His-85 is part of the active site.

It belongs to the GPI family.

The protein localises to the cytoplasm. It carries out the reaction alpha-D-glucose 6-phosphate = beta-D-fructose 6-phosphate. Its pathway is carbohydrate biosynthesis; gluconeogenesis. It functions in the pathway carbohydrate degradation; glycolysis; D-glyceraldehyde 3-phosphate and glycerone phosphate from D-glucose: step 2/4. Catalyzes the reversible isomerization of glucose-6-phosphate to fructose-6-phosphate. This is Glucose-6-phosphate isomerase from Klebsiella oxytoca.